The chain runs to 663 residues: Protein-arginine deiminase type-1 (663 aa).

Residues Asn153, Asp155, Asp157, Asp165, Asp176, Asp179, Gln351, Glu353, Lys364, Asp371, Ser372, Asn375, Phe409, and Leu412 each coordinate Ca(2+). Catalysis depends on Cys645, which acts as the Nucleophile.

The protein belongs to the protein arginine deiminase family. Monomer. It depends on Ca(2+) as a cofactor. As to expression, detected in epidermal keratinocytes (at protein level). Epidermis, prostate, testis, placenta, spleen and thymus.

It is found in the cytoplasm. The enzyme catalyses L-arginyl-[protein] + H2O = L-citrullyl-[protein] + NH4(+). Its function is as follows. Catalyzes the deimination of arginine residues of proteins. The sequence is that of Protein-arginine deiminase type-1 (PADI1) from Homo sapiens (Human).